Here is a 40-residue protein sequence, read N- to C-terminus: Photosystem II reaction center protein J (40 aa).

A helical membrane pass occupies residues 8–28; that stretch reads IPLWVIGTVAGIPVIGLIGIF.

It belongs to the PsbJ family. As to quaternary structure, PSII is composed of 1 copy each of membrane proteins PsbA, PsbB, PsbC, PsbD, PsbE, PsbF, PsbH, PsbI, PsbJ, PsbK, PsbL, PsbM, PsbT, PsbX, PsbY, PsbZ, Psb30/Ycf12, at least 3 peripheral proteins of the oxygen-evolving complex and a large number of cofactors. It forms dimeric complexes.

Its subcellular location is the plastid. The protein resides in the chloroplast thylakoid membrane. In terms of biological role, one of the components of the core complex of photosystem II (PSII). PSII is a light-driven water:plastoquinone oxidoreductase that uses light energy to abstract electrons from H(2)O, generating O(2) and a proton gradient subsequently used for ATP formation. It consists of a core antenna complex that captures photons, and an electron transfer chain that converts photonic excitation into a charge separation. This chain is Photosystem II reaction center protein J, found in Nasturtium officinale (Watercress).